The chain runs to 391 residues: Tryptophan synthase beta chain (391 aa).

Position 84 is an N6-(pyridoxal phosphate)lysine (Lys84).

Belongs to the TrpB family. As to quaternary structure, tetramer of two alpha and two beta chains. Pyridoxal 5'-phosphate serves as cofactor.

The catalysed reaction is (1S,2R)-1-C-(indol-3-yl)glycerol 3-phosphate + L-serine = D-glyceraldehyde 3-phosphate + L-tryptophan + H2O. Its pathway is amino-acid biosynthesis; L-tryptophan biosynthesis; L-tryptophan from chorismate: step 5/5. Functionally, the beta subunit is responsible for the synthesis of L-tryptophan from indole and L-serine. The chain is Tryptophan synthase beta chain from Thermoanaerobacter pseudethanolicus (strain ATCC 33223 / 39E) (Clostridium thermohydrosulfuricum).